Reading from the N-terminus, the 404-residue chain is Chorismate synthase (404 aa).

Residues R40 and R46 each contribute to the NADP(+) site. FMN is bound by residues 133-135 (RSS), 266-267 (QA), G313, 328-332 (KPIPT), and R354. The tract at residues 283-320 (PGSQVHDPIEPREDGAQAYPRRTNHAGGTEGGTTTGMP) is disordered. The disordered stretch occupies residues 337-357 (LDSVDTATGEPEPTRYERSDI).

The protein belongs to the chorismate synthase family. Homotetramer. FMNH2 serves as cofactor.

It catalyses the reaction 5-O-(1-carboxyvinyl)-3-phosphoshikimate = chorismate + phosphate. It functions in the pathway metabolic intermediate biosynthesis; chorismate biosynthesis; chorismate from D-erythrose 4-phosphate and phosphoenolpyruvate: step 7/7. Its function is as follows. Catalyzes the anti-1,4-elimination of the C-3 phosphate and the C-6 proR hydrogen from 5-enolpyruvylshikimate-3-phosphate (EPSP) to yield chorismate, which is the branch point compound that serves as the starting substrate for the three terminal pathways of aromatic amino acid biosynthesis. This reaction introduces a second double bond into the aromatic ring system. This is Chorismate synthase from Salinibacter ruber (strain DSM 13855 / M31).